The primary structure comprises 154 residues: Small ribosomal subunit protein uS9 (154 aa).

The interval 133–154 (RAKESKKYGLKKARKAPQYSKR) is disordered. Residues 140 to 154 (YGLKKARKAPQYSKR) show a composition bias toward basic residues.

It belongs to the universal ribosomal protein uS9 family.

The chain is Small ribosomal subunit protein uS9 from Salinispora tropica (strain ATCC BAA-916 / DSM 44818 / JCM 13857 / NBRC 105044 / CNB-440).